Reading from the N-terminus, the 1378-residue chain is DNA-directed RNA polymerase subunit beta (1378 aa).

This sequence belongs to the RNA polymerase beta chain family. In terms of assembly, the RNAP catalytic core consists of 2 alpha, 1 beta, 1 beta' and 1 omega subunit. When a sigma factor is associated with the core the holoenzyme is formed, which can initiate transcription.

It catalyses the reaction RNA(n) + a ribonucleoside 5'-triphosphate = RNA(n+1) + diphosphate. Its function is as follows. DNA-dependent RNA polymerase catalyzes the transcription of DNA into RNA using the four ribonucleoside triphosphates as substrates. The polypeptide is DNA-directed RNA polymerase subunit beta (Dinoroseobacter shibae (strain DSM 16493 / NCIMB 14021 / DFL 12)).